The primary structure comprises 189 residues: Probable nicotinate-nucleotide adenylyltransferase (189 aa).

It belongs to the NadD family.

The catalysed reaction is nicotinate beta-D-ribonucleotide + ATP + H(+) = deamido-NAD(+) + diphosphate. The protein operates within cofactor biosynthesis; NAD(+) biosynthesis; deamido-NAD(+) from nicotinate D-ribonucleotide: step 1/1. Functionally, catalyzes the reversible adenylation of nicotinate mononucleotide (NaMN) to nicotinic acid adenine dinucleotide (NaAD). In Staphylococcus aureus (strain MRSA252), this protein is Probable nicotinate-nucleotide adenylyltransferase.